The following is a 417-amino-acid chain: D-amino acid dehydrogenase (417 aa).

3–17 is a binding site for FAD; that stretch reads VVILGSGVVGVSTAW.

It belongs to the DadA oxidoreductase family. FAD serves as cofactor.

It catalyses the reaction a D-alpha-amino acid + A + H2O = a 2-oxocarboxylate + AH2 + NH4(+). It functions in the pathway amino-acid degradation; D-alanine degradation; NH(3) and pyruvate from D-alanine: step 1/1. Its function is as follows. Oxidative deamination of D-amino acids. In Pectobacterium atrosepticum (strain SCRI 1043 / ATCC BAA-672) (Erwinia carotovora subsp. atroseptica), this protein is D-amino acid dehydrogenase.